A 366-amino-acid polypeptide reads, in one-letter code: Mitogen-activated protein kinase 13 (366 aa).

The region spanning 25 to 308 (YLAPAHVGSG…AAQALAHPFF (284 aa)) is the Protein kinase domain. Residues 31 to 39 (VGSGAYGAV) and Lys-54 each bind ATP. The Proton acceptor role is filled by Asp-150. Position 180 is a phosphothreonine; by MAP2K3, MAP2K4, MAP2K6 and MAP2K7 (Thr-180). The TXY signature appears at 180-182 (TGY). At Tyr-182 the chain carries Phosphotyrosine. At Ser-350 the chain carries Phosphoserine.

It belongs to the protein kinase superfamily. CMGC Ser/Thr protein kinase family. MAP kinase subfamily. As to quaternary structure, interacts with MAPK8IP2. It depends on Mg(2+) as a cofactor. In terms of processing, dually phosphorylated on Thr-180 and Tyr-182 by MAP2K3/MKK3, MAP2K4/MKK4, MAP2K6/MKK6 and MAP2K7/MKK7, which activates the enzyme. Dephosphorylated by dual specificity phosphatase DUSP1.

It carries out the reaction L-seryl-[protein] + ATP = O-phospho-L-seryl-[protein] + ADP + H(+). It catalyses the reaction L-threonyl-[protein] + ATP = O-phospho-L-threonyl-[protein] + ADP + H(+). With respect to regulation, activated by phosphorylation on threonine and tyrosine by dual specificity kinases, MAP2K3/MKK3, MAP2K6/MKK6, MAP2K4/MKK4 and MAP2K7/MKK7. Activation by ultraviolet radiation, hyperosmotic shock, anisomycin or by TNF-alpha is mediated by MAP2K3/MKK3. Inhibited by dual specificity phosphatase DUSP1. Its function is as follows. Serine/threonine kinase which acts as an essential component of the MAP kinase signal transduction pathway. MAPK13 is one of the four p38 MAPKs which play an important role in the cascades of cellular responses evoked by extracellular stimuli such as pro-inflammatory cytokines or physical stress leading to direct activation of transcription factors such as ELK1 and ATF2. Accordingly, p38 MAPKs phosphorylate a broad range of proteins and it has been estimated that they may have approximately 200 to 300 substrates each. MAPK13 is one of the less studied p38 MAPK isoforms. Some of the targets are downstream kinases such as MAPKAPK2, which are activated through phosphorylation and further phosphorylate additional targets. Plays a role in the regulation of protein translation by phosphorylating and inactivating EEF2K. Involved in cytoskeletal remodeling through phosphorylation of MAPT and STMN1. Mediates UV irradiation induced up-regulation of the gene expression of CXCL14. Plays an important role in the regulation of epidermal keratinocyte differentiation, apoptosis and skin tumor development. Phosphorylates the transcriptional activator MYB in response to stress which leads to rapid MYB degradation via a proteasome-dependent pathway. MAPK13 also phosphorylates and down-regulates PRKD1 during regulation of insulin secretion in pancreatic beta cells. The chain is Mitogen-activated protein kinase 13 (Mapk13) from Mus musculus (Mouse).